Reading from the N-terminus, the 1627-residue chain is DNA topoisomerase 2-beta (1627 aa).

ATP contacts are provided by residues Asn117, Asn146, 174-176 (SSN), and 187-194 (GRNGYGAK). The segment at 368–370 (KKK) is interaction with DNA. Residue 402–404 (QTK) participates in ATP binding. Residues 481-598 (CTLILTEGDS…SLLKHGFLEE (118 aa)) enclose the Toprim domain. Residues Glu487, Asp567, and Asp569 each coordinate Mg(2+). Residues 741–1194 (IPSLVDGLKP…SASDLWKEDL (454 aa)) enclose the Topo IIA-type catalytic domain. The O-(5'-phospho-DNA)-tyrosine intermediate role is filled by Tyr831. An interaction with DNA region spans residues 1016-1025 (KLQTSLTCNS). Disordered stretches follow at residues 1115–1144 (AWKEAQEKAAEEEDPQNANDDASSASGSTS), 1224–1248 (KVGKPKMKKLQLEETMPSPFGRRIV), 1283–1365 (EFGG…DSLL), and 1378–1627 (DFSK…DMFN). Residues 1131–1144 (NANDDASSASGSTS) are compositionally biased toward low complexity. The span at 1296 to 1305 (TVNTAASGTK) shows a compositional bias: polar residues. A compositionally biased stretch (basic and acidic residues) spans 1339–1349 (PWSDDESKSES). Composition is skewed to acidic residues over residues 1381 to 1392 (KEEDDAHDDDDA) and 1412 to 1428 (REDEFVPSDSVEKDEYD). 2 stretches are compositionally biased toward basic and acidic residues: residues 1436 to 1448 (PSPEKMSQEKKNQ) and 1462 to 1471 (KTDDDTTKLD). Composition is skewed to basic residues over residues 1542 to 1552 (GKGRGAKKRKT) and 1566 to 1578 (KAPKSTPCKKSKK). Positions 1616-1627 (ESDEDDDFDMFN) are enriched in acidic residues.

Belongs to the type II topoisomerase family. In terms of assembly, homodimer. Requires Mg(2+) as cofactor. The cofactor is Mn(2+). Ca(2+) is required as a cofactor.

It localises to the nucleus. The protein resides in the nucleolus. Its subcellular location is the nucleoplasm. It carries out the reaction ATP-dependent breakage, passage and rejoining of double-stranded DNA.. Functionally, key decatenating enzyme that alters DNA topology by binding to two double-stranded DNA molecules, generating a double-stranded break in one of the strands, passing the intact strand through the broken strand, and religating the broken strand. Plays a role in B-cell differentiation. The protein is DNA topoisomerase 2-beta (TOP2B) of Gallus gallus (Chicken).